We begin with the raw amino-acid sequence, 395 residues long: Dihydroorotate dehydrogenase (quinone), mitochondrial (395 aa).

The N-terminal 10 residues, 1 to 10 (MAWRHLKKRA), are a transit peptide targeting the mitochondrion; not cleaved. Residues 1-10 (MAWRHLKKRA) lie on the Mitochondrial matrix side of the membrane. The helical transmembrane segment at 11–30 (QDAVIILGGGGLLFASYLMA) threads the bilayer. Residues 31 to 395 (TGDERFYAEH…TDAIGADHRR (365 aa)) are Mitochondrial intermembrane-facing. Residues 95–99 (AGFDK) and S119 contribute to the FMN site. Position 99 (K99) interacts with substrate. Position 144-148 (144-148 (NRYGF)) interacts with substrate. FMN contacts are provided by N180 and N211. Residue 211-216 (NVSSPN) participates in substrate binding. S214 functions as the Nucleophile in the catalytic mechanism. FMN-binding residues include K254 and T282. A substrate-binding site is contributed by 283–284 (NT). FMN contacts are provided by residues G305, G334, and 355–356 (YT).

This sequence belongs to the dihydroorotate dehydrogenase family. Type 2 subfamily. As to quaternary structure, monomer. FMN serves as cofactor. In terms of processing, the uncleaved transit peptide is required for mitochondrial targeting and proper membrane integration.

The protein resides in the mitochondrion inner membrane. It carries out the reaction (S)-dihydroorotate + a quinone = orotate + a quinol. It participates in pyrimidine metabolism; UMP biosynthesis via de novo pathway; orotate from (S)-dihydroorotate (quinone route): step 1/1. In terms of biological role, catalyzes the conversion of dihydroorotate to orotate with quinone as electron acceptor. Required for UMP biosynthesis via de novo pathway. The sequence is that of Dihydroorotate dehydrogenase (quinone), mitochondrial (DHODH) from Homo sapiens (Human).